Here is a 492-residue protein sequence, read N- to C-terminus: MKRTVEVNESILRVWFEGCKDVKIMNRKWCADTTTTTILLVYCQHVIDHTKLKQAIAPEMCNDLLQSSFKDSNLLASNSQFSVTTLELENSNENVSRMLFEGKLLIIFQEYKRGYTIDIAKLPTRSIEQSNTEMTIRGSRDGFVEELSTNIGLIRKRLKTSSLSYDEFIIGERTQTKVGLLYLKDVASQETISQVQFKLKEINIDGVVSSAQIEEFITGDQFSLFPLIEYTGRPDYAVNCLLHGRFILLVDGSPTATIAPVSFPFFVNTAEDQNYFYLFGSFVRLLSLFGIAISIFLPGFWVALVTYHPDQIPYTLLATLSLSREGIPFPAPLEGMIMITLFELLRQAGLRIPAAFGQTLSVVGGLIIGQAAISSGFVSPSMVVMIAISVVSTFTLVNQSFTGTLSILRYGVFLMSSFLGIVGFICSILLIVIHVANLRSFGLPFLAPYSPPVFSSMLPSTFRIPFTRMKKRPKELHTYDNTRQRTNNDENK.

Transmembrane regions (helical) follow at residues 246-266 (FILL…FPFF), 285-305 (LLSL…VALV), 325-345 (EGIP…FELL), 353-373 (PAAF…QAAI), 377-397 (FVSP…FTLV), 413-433 (FLMS…LIVI), and 442-462 (GLPF…PSTF).

The protein belongs to the GerABKA family.

It localises to the cell membrane. Its function is as follows. May allow B.anthracis to germinate within phagocytic cells and therefore involved in virulence. The polypeptide is Spore germination protein XA (gerXA) (Bacillus anthracis).